We begin with the raw amino-acid sequence, 542 residues long: CTP synthase (542 aa).

An amidoligase domain region spans residues 1 to 265 (MARYVFITGG…DNEVLAAFGI (265 aa)). Ser13 is a binding site for CTP. Ser13 is a UTP binding site. ATP is bound by residues 14–19 (SLGKGI) and Asp71. Residues Asp71 and Glu139 each coordinate Mg(2+). CTP-binding positions include 146 to 148 (DIE), 186 to 191 (KTKPTQ), and Lys222. Residues 186–191 (KTKPTQ) and Lys222 each bind UTP. The Glutamine amidotransferase type-1 domain maps to 291 to 541 (TIAIVGKYTG…IEAALEQSRL (251 aa)). Gly353 is an L-glutamine binding site. The active-site Nucleophile; for glutamine hydrolysis is the Cys380. L-glutamine-binding positions include 381–384 (FGMQ), Glu404, and Arg469. Active-site residues include His514 and Glu516.

This sequence belongs to the CTP synthase family. Homotetramer.

It catalyses the reaction UTP + L-glutamine + ATP + H2O = CTP + L-glutamate + ADP + phosphate + 2 H(+). The enzyme catalyses L-glutamine + H2O = L-glutamate + NH4(+). It carries out the reaction UTP + NH4(+) + ATP = CTP + ADP + phosphate + 2 H(+). The protein operates within pyrimidine metabolism; CTP biosynthesis via de novo pathway; CTP from UDP: step 2/2. Allosterically activated by GTP, when glutamine is the substrate; GTP has no effect on the reaction when ammonia is the substrate. The allosteric effector GTP functions by stabilizing the protein conformation that binds the tetrahedral intermediate(s) formed during glutamine hydrolysis. Inhibited by the product CTP, via allosteric rather than competitive inhibition. In terms of biological role, catalyzes the ATP-dependent amination of UTP to CTP with either L-glutamine or ammonia as the source of nitrogen. Regulates intracellular CTP levels through interactions with the four ribonucleotide triphosphates. The chain is CTP synthase from Rhizobium meliloti (strain 1021) (Ensifer meliloti).